The following is a 379-amino-acid chain: MKRDLYETLGVKKNADEKELKSAFRKLAMKYHPDRNPGDQEAEKSFKEINEAYETLKDPQKRAAYDRYGHAAFEQGGMGAGFGNGFAGGSAGGFSDIFEDIFGEMMGGRQRRSSGGRERGADLRYNMEITLEEAYSGKTAQIRVPTSVTCDVCTGSGAKPGTSPKTCATCQGSGRIRAAQGFFSIERTCPTCGGRGQTITDPCTKCHGQGRVTEERTLSVNIPTGIEDGTRIRLSGEGEAGLRGGPAGDLYIFLSVKPHEFYQRDGADLYCSVPISMTTAALGGKFDVTTLDGTKSRVTVPEGTQAGKQFRLKGKGMPVLRSNQTGDLYIQIQIETPQKLTKRQRELLQEFEQISSKENNPQSTGFFSRMKDFFDTLSE.

In terms of domain architecture, J spans 4-69 (DLYETLGVKK…QKRAAYDRYG (66 aa)). The CR-type zinc finger occupies 137–215 (GKTAQIRVPT…CHGQGRVTEE (79 aa)). C150, C153, C167, C170, C189, C192, C203, and C206 together coordinate Zn(2+). CXXCXGXG motif repeat units follow at residues 150-157 (CDVCTGSG), 167-174 (CATCQGSG), 189-196 (CPTCGGRG), and 203-210 (CTKCHGQG).

This sequence belongs to the DnaJ family. In terms of assembly, homodimer. It depends on Zn(2+) as a cofactor.

It is found in the cytoplasm. Participates actively in the response to hyperosmotic and heat shock by preventing the aggregation of stress-denatured proteins and by disaggregating proteins, also in an autonomous, DnaK-independent fashion. Unfolded proteins bind initially to DnaJ; upon interaction with the DnaJ-bound protein, DnaK hydrolyzes its bound ATP, resulting in the formation of a stable complex. GrpE releases ADP from DnaK; ATP binding to DnaK triggers the release of the substrate protein, thus completing the reaction cycle. Several rounds of ATP-dependent interactions between DnaJ, DnaK and GrpE are required for fully efficient folding. Also involved, together with DnaK and GrpE, in the DNA replication of plasmids through activation of initiation proteins. This chain is Chaperone protein DnaJ, found in Sinorhizobium fredii (strain NBRC 101917 / NGR234).